The sequence spans 31 residues: Kappa-sparatoxin-Hv1c (31 aa).

3 disulfide bridges follow: Cys2/Cys16, Cys9/Cys21, and Cys15/Cys25. Trp31 is subject to Tryptophan amide.

In terms of tissue distribution, expressed by the venom gland.

The protein localises to the secreted. Blocks transient outward voltage-gated potassium channels in rat ventricular myocytes (thus prolonging action-potential duration) and rat Kv4.2/KCNA4 channels expressed in Xenopus oocytes. Is also a weak blocker of calcium channels in rat cerebellar granule cells. The sequence is that of Kappa-sparatoxin-Hv1c from Heteropoda venatoria (Brown huntsman spider).